Reading from the N-terminus, the 987-residue chain is Nuclear matrix constituent protein 1b (987 aa).

Positions 1–25 (MASPRSAGGVGGGGGGGGGSGGAAA) are disordered. Positions 8–24 (GGVGGGGGGGGGSGGAA) are enriched in gly residues. 2 coiled-coil regions span residues 403 to 545 (LAEL…ERRA) and 594 to 717 (LSKI…DREA). Composition is skewed to basic and acidic residues over residues 752–764 (SDINVKDNHHDNS) and 898–908 (CKEHEYGDKGP). Disordered regions lie at residues 752-775 (SDINVKDNHHDNSHSSPKQRFGRK) and 887-987 (HDEA…FLIT). Positions 944-954 (ATVSATETSNV) are enriched in polar residues. The span at 956–973 (GPEDNNDSDEEDEEEEEE) shows a compositional bias: acidic residues.

This sequence belongs to the CRWN family. As to quaternary structure, interacts with SWI3C.

It localises to the nucleus matrix. Its subcellular location is the nucleus lamina. Architectural component of nuclear structure that plays different roles in controlling nuclear size and morphology. Involved in the modification of chromatin accessibility by interacting with SWI3C, a component of the chromatin-remodeling complex, to thus reduce the suppression effect of the complex. Acts as positive regulator of drought resistance and modulates root growth. Positively regulates the expression of genes related to root growth and drought resistance. This chain is Nuclear matrix constituent protein 1b, found in Oryza sativa subsp. japonica (Rice).